The chain runs to 114 residues: Fluoride-specific ion channel FluC 1 (114 aa).

The next 3 helical transmembrane spans lie at A23–F43, L52–V72, and F84–G104. Na(+)-binding residues include G62 and T65.

The protein belongs to the fluoride channel Fluc/FEX (TC 1.A.43) family.

It is found in the cell membrane. The enzyme catalyses fluoride(in) = fluoride(out). With respect to regulation, na(+) is not transported, but it plays an essential structural role and its presence is essential for fluoride channel function. Fluoride-specific ion channel. Important for reducing fluoride concentration in the cell, thus reducing its toxicity. In Desulfitobacterium hafniense (strain Y51), this protein is Fluoride-specific ion channel FluC 1.